The sequence spans 511 residues: 2-isopropylmalate synthase (511 aa).

Positions 6 to 269 constitute a Pyruvate carboxyltransferase domain; that stretch reads IIIFDTTLRD…YTDIKCENIS (264 aa). Positions 15, 203, 205, and 239 each coordinate Mn(2+). Residues 394–511 form a regulatory domain region; sequence VLEKLSVISG…SLKVEERKMA (118 aa).

This sequence belongs to the alpha-IPM synthase/homocitrate synthase family. LeuA type 1 subfamily. In terms of assembly, homodimer. Requires Mn(2+) as cofactor.

The protein resides in the cytoplasm. The enzyme catalyses 3-methyl-2-oxobutanoate + acetyl-CoA + H2O = (2S)-2-isopropylmalate + CoA + H(+). It participates in amino-acid biosynthesis; L-leucine biosynthesis; L-leucine from 3-methyl-2-oxobutanoate: step 1/4. Functionally, catalyzes the condensation of the acetyl group of acetyl-CoA with 3-methyl-2-oxobutanoate (2-ketoisovalerate) to form 3-carboxy-3-hydroxy-4-methylpentanoate (2-isopropylmalate). The protein is 2-isopropylmalate synthase of Campylobacter jejuni subsp. doylei (strain ATCC BAA-1458 / RM4099 / 269.97).